The sequence spans 100 residues: NADH-quinone oxidoreductase subunit K (100 aa).

3 helical membrane passes run 1–21, 28–48, and 64–84; these read MIGLNHYLIVSGLLFCIGLAG, ILLLFFSTEIMLNAINIGFVA, and FIIAIAASEVAIGLGLVILWF.

This sequence belongs to the complex I subunit 4L family. As to quaternary structure, NDH-1 is composed of 14 different subunits. Subunits NuoA, H, J, K, L, M, N constitute the membrane sector of the complex.

It localises to the cell inner membrane. It catalyses the reaction a quinone + NADH + 5 H(+)(in) = a quinol + NAD(+) + 4 H(+)(out). In terms of biological role, NDH-1 shuttles electrons from NADH, via FMN and iron-sulfur (Fe-S) centers, to quinones in the respiratory chain. The immediate electron acceptor for the enzyme in this species is believed to be ubiquinone. Couples the redox reaction to proton translocation (for every two electrons transferred, four hydrogen ions are translocated across the cytoplasmic membrane), and thus conserves the redox energy in a proton gradient. In Helicobacter pylori (strain P12), this protein is NADH-quinone oxidoreductase subunit K.